Consider the following 335-residue polypeptide: Transcription factor E2F5 (335 aa).

Positions 1–18 (MAAAEPTSSAQPTPQAQA) are enriched in low complexity. The disordered stretch occupies residues 1–40 (MAAAEPTSSAQPTPQAQAQPPPHGAPSSQPSAALAGGSSR). Residues 37–108 (GSSRHEKSLG…KNSIQWKGVG (72 aa)) mediate DNA binding. A leucine-zipper region spans residues 66-88 (LKAAADTLAVRQKRRIYDITNVL). The short motif at 71–108 (DTLAVRQKRRIYDITNVLEGIDLIEKKSKNSIQWKGVG) is the DEF box element. Residues 109 to 205 (AGCNTKEVID…GQNGQKKYQI (97 aa)) are dimerization. A disordered region spans residues 226–285 (SKPVVFPVPPPDDLTQPSSQSSTSVTPQKSTMAAQNLPEQHVSERSQTFQQTPAAEVSSG). The span at 238-256 (DLTQPSSQSSTSVTPQKST) shows a compositional bias: low complexity. The segment at 277–335 (TPAAEVSSGSISGDIIDELMSSDVFPLLRLSPTPADDYNFNLDDNEGVCDLFDVQILNY) is transactivation. Residues 312 to 329 (DDYNFNLDDNEGVCDLFD) form an RBL2 association region.

It belongs to the E2F/DP family. Component of the DRTF1/E2F transcription factor complex. Binds cooperatively with DP-1 to E2F sites. Interaction with retinoblastoma protein RB1 or proteins RBL1 and RBL2 inhibits the E2F transactivation domain. Component of the DREAM complex (also named LINC complex) at least composed of E2F4, E2F5, LIN9, LIN37, LIN52, LIN54, MYBL1, MYBL2, RBL1, RBL2, RBBP4, TFDP1 and TFDP2. The complex exists in quiescent cells where it represses cell cycle-dependent genes. It dissociates in S phase when LIN9, LIN37, LIN52 and LIN54 form a subcomplex that binds to MYBL2.

It is found in the nucleus. Its function is as follows. Transcriptional activator that binds to E2F sites, these sites are present in the promoter of many genes whose products are involved in cell proliferation. May mediate growth factor-initiated signal transduction. It is likely involved in the early responses of resting cells to growth factor stimulation. Specifically required for multiciliate cell differentiation: together with MCIDAS and E2F5, binds and activate genes required for centriole biogenesis. The chain is Transcription factor E2F5 (E2f5) from Mus musculus (Mouse).